We begin with the raw amino-acid sequence, 288 residues long: Small ribosomal subunit protein uS2 (288 aa).

A compositionally biased stretch (low complexity) spans 259 to 276 (EAAPAAEEAPAAEAEAAA). The segment at 259 to 288 (EAAPAAEEAPAAEAEAAATDTSSESDKTEA) is disordered.

This sequence belongs to the universal ribosomal protein uS2 family.

The protein is Small ribosomal subunit protein uS2 of Maricaulis maris (strain MCS10) (Caulobacter maris).